A 425-amino-acid chain; its full sequence is Inositol hexakisphosphate kinase 2 (425 aa).

ATP-binding positions include 206–208 and D219; that span reads ENL. Substrate is bound by residues 215-223, K221, and 235-242; these read PCVLDLKMG and KAANQIRK. D382 lines the ATP pocket. Residue H385 coordinates substrate.

This sequence belongs to the inositol phosphokinase (IPK) family. Highly expressed in small intestine.

The protein resides in the nucleus. It catalyses the reaction 1D-myo-inositol hexakisphosphate + ATP = 5-diphospho-1D-myo-inositol 1,2,3,4,6-pentakisphosphate + ADP. The protein operates within phospholipid metabolism; phosphatidylinositol metabolism. In terms of biological role, converts inositol hexakisphosphate (InsP6) to diphosphoinositol pentakisphosphate (InsP7/PP-InsP5). The sequence is that of Inositol hexakisphosphate kinase 2 (Ip6k2) from Rattus norvegicus (Rat).